We begin with the raw amino-acid sequence, 392 residues long: Chorismate synthase (392 aa).

Positions 39 and 45 each coordinate NADP(+). Residues 131–133 (RSS), 255–256 (NA), Gly300, 315–319 (KPIPT), and Arg341 each bind FMN.

Belongs to the chorismate synthase family. In terms of assembly, homotetramer. Requires FMNH2 as cofactor.

It catalyses the reaction 5-O-(1-carboxyvinyl)-3-phosphoshikimate = chorismate + phosphate. It participates in metabolic intermediate biosynthesis; chorismate biosynthesis; chorismate from D-erythrose 4-phosphate and phosphoenolpyruvate: step 7/7. In terms of biological role, catalyzes the anti-1,4-elimination of the C-3 phosphate and the C-6 proR hydrogen from 5-enolpyruvylshikimate-3-phosphate (EPSP) to yield chorismate, which is the branch point compound that serves as the starting substrate for the three terminal pathways of aromatic amino acid biosynthesis. This reaction introduces a second double bond into the aromatic ring system. The polypeptide is Chorismate synthase (Leuconostoc mesenteroides subsp. mesenteroides (strain ATCC 8293 / DSM 20343 / BCRC 11652 / CCM 1803 / JCM 6124 / NCDO 523 / NBRC 100496 / NCIMB 8023 / NCTC 12954 / NRRL B-1118 / 37Y)).